We begin with the raw amino-acid sequence, 104 residues long: Replication restart protein PriB (104 aa).

Positions 1–101 (MTNRLVLSGT…LHAEQIELID (101 aa)) constitute an SSB domain.

It belongs to the PriB family. Homodimer. Interacts with PriA and DnaT. Component of the replication restart primosome. Primosome assembly occurs via a 'hand-off' mechanism. PriA binds to replication forks, subsequently PriB then DnaT bind; DnaT then displaces ssDNA to generate the helicase loading substrate.

Functionally, involved in the restart of stalled replication forks, which reloads the replicative helicase on sites other than the origin of replication; the PriA-PriB pathway is the major replication restart pathway. During primosome assembly it facilitates complex formation between PriA and DnaT on DNA; stabilizes PriA on DNA. Stimulates the DNA unwinding activity of PriA helicase. The sequence is that of Replication restart protein PriB from Shigella dysenteriae serotype 1 (strain Sd197).